The sequence spans 799 residues: Protein scabrous (799 aa).

The signal sequence occupies residues 1–51 (MRDWQTFPDLQKKKVSRDHLNCPATMAGSNVLWPILLAVVLLQISVAFVSG). The tract at residues 287–316 (TRKDGSSASVEEESGSQEANQEQTGLETTA) is disordered. N-linked (GlcNAc...) asparagine glycosylation occurs at asparagine 372. Over residues 489 to 498 (LNKPHKRPHH) the composition is skewed to basic residues. The disordered stretch occupies residues 489–509 (LNKPHKRPHHQNVQAQMPQDD). One can recognise a Fibrinogen C-terminal domain in the interval 533 to 737 (AIINKLPHDC…SSRMLVKRLP (205 aa)). A disulfide bond links cysteine 542 and cysteine 568. N-linked (GlcNAc...) asparagine glycans are attached at residues asparagine 587, asparagine 618, and asparagine 660. A disulfide bridge links cysteine 687 with cysteine 700. N-linked (GlcNAc...) asparagine glycosylation is found at asparagine 744 and asparagine 787.

Post-translationally, possesses five pairs of dibasic residues that may be the target of proteolytic processing.

The protein resides in the late endosome. Its function is as follows. Involved in regulation of neurogenesis. May encode a lateral inhibitor of R8 differentiation. In conjunction with Gp150, promotes Notch activation in response to Delta by regulating acquisition of insensitivity to Delta in a subset of cells. The sequence is that of Protein scabrous (sca) from Drosophila melanogaster (Fruit fly).